We begin with the raw amino-acid sequence, 1872 residues long: E3 ubiquitin-protein ligase UBR2 (1872 aa).

The UBR-type zinc-finger motif lies at 96 to 172 (TACTRLCFPS…DAFKCKNELN (77 aa)). Residue Lys-709 forms a Glycyl lysine isopeptide (Lys-Gly) (interchain with G-Cter in ubiquitin) linkage. An interaction with UBC2 region spans residues 1134–1240 (RYLMETAPHV…SSNTINSCCD (107 aa)). Residues 1203 to 1227 (NNSVDTSDISTPRTTSPSLSPTRIN) are disordered. Residues 1212–1225 (STPRTTSPSLSPTR) show a composition bias toward low complexity. Phosphoserine occurs at positions 1218 and 1222. An RING-type; atypical zinc finger spans residues 1241–1362 (DDCVFCKMPK…GLIYCPVCNS (122 aa)).

Belongs to the E3 ubiquitin-protein ligase UBR1-like family. As to quaternary structure, interacts with MUB1, RPN4 and UBC2.

Its subcellular location is the cytoplasm. The enzyme catalyses S-ubiquitinyl-[E2 ubiquitin-conjugating enzyme]-L-cysteine + [acceptor protein]-L-lysine = [E2 ubiquitin-conjugating enzyme]-L-cysteine + N(6)-ubiquitinyl-[acceptor protein]-L-lysine.. The protein operates within protein modification; protein ubiquitination. Functionally, E3 ubiquitin-protein ligase which probably functions outside the N-end rule pathway, since it lacks the residues essential for the degradation of N-end rule substrates. Mediates RPN4 ubiquitination and subsequent degradation. The sequence is that of E3 ubiquitin-protein ligase UBR2 (UBR2) from Saccharomyces cerevisiae (strain ATCC 204508 / S288c) (Baker's yeast).